The primary structure comprises 602 residues: Zinc finger protein 652-B (602 aa).

The interval 60–232 is disordered; the sequence is FQDSKPTNEV…PSDKAKSEEK (173 aa). Residues 65-79 show a composition bias toward basic and acidic residues; it reads PTNEVHAVKGERENS. Acidic residues-rich tracts occupy residues 80–108 and 148–167; these read GESE…DEDE and DDEG…DEEN. Positions 222–232 are enriched in basic and acidic residues; the sequence is SPSDKAKSEEK. The C2H2-type 1 zinc finger occupies 235–258; it reads LTCDKCPRVFNTRWYLEKHMNVTH. The segment at 262-284 adopts a C2H2-type 2; degenerate zinc-finger fold; the sequence is QICDKCGKKFVLESELSLHLQTD. 6 C2H2-type zinc fingers span residues 289–312, 319–341, 347–369, 375–397, 403–425, and 431–453; these read IQCI…KIVH, FSCE…LVAH, FTCE…SLQH, FRCE…MSIH, FMCQ…MKTH, and FICE…RRTH. Residues 459–482 form a C2H2-type 9; degenerate zinc finger; that stretch reads YPCDVCGMRFRFSNMLKAHKEKCF. The tract at residues 543 to 575 is disordered; the sequence is PFSHLHLHPHSHTHHLAVPPVPHLPPPPALFKS. Residues 545 to 557 are compositionally biased toward basic residues; sequence SHLHLHPHSHTHH. Residues 561–571 are compositionally biased toward pro residues; that stretch reads PPVPHLPPPPA.

This sequence belongs to the krueppel C2H2-type zinc-finger protein family.

It is found in the nucleus. In terms of biological role, may be involved in transcriptional regulation. The polypeptide is Zinc finger protein 652-B (znf652-b) (Xenopus laevis (African clawed frog)).